The primary structure comprises 334 residues: Mevalonate kinase (334 aa).

Residue proline 110–alanine 120 coordinates ATP. The active-site Proton acceptor is aspartate 161.

Belongs to the GHMP kinase family. Mevalonate kinase subfamily. In terms of assembly, homodimer. Mg(2+) serves as cofactor.

The protein resides in the cytoplasm. The enzyme catalyses (R)-mevalonate + ATP = (R)-5-phosphomevalonate + ADP + H(+). It functions in the pathway isoprenoid biosynthesis; isopentenyl diphosphate biosynthesis via mevalonate pathway; isopentenyl diphosphate from (R)-mevalonate: step 1/3. Its function is as follows. Catalyzes the phosphorylation of (R)-mevalonate (MVA) to (R)-mevalonate 5-phosphate (MVAP). Functions in the mevalonate (MVA) pathway leading to isopentenyl diphosphate (IPP), a key precursor for the biosynthesis of isoprenoid compounds such as archaeal membrane lipids. The chain is Mevalonate kinase from Thermococcus gammatolerans (strain DSM 15229 / JCM 11827 / EJ3).